Consider the following 964-residue polypeptide: Pumilio homolog 3 (964 aa).

The segment at 1-22 (MMIPELGRRPMHRGNEDSSFGD) is disordered. At serine 192 the chain carries Phosphoserine. Disordered regions lie at residues 204 to 235 (PVVQ…ASQG), 256 to 300 (GTPD…TSGL), and 343 to 388 (DGHN…VANP). Composition is skewed to polar residues over residues 207–216 (QQPSRPASRN) and 223–234 (DSNNNLSPSASQ). Phosphothreonine is present on threonine 257. Polar residues-rich tracts occupy residues 287-300 (TSNQ…TSGL) and 356-384 (RSDQ…SGSG). The region spanning 606 to 946 (FGSSMLEEFK…HIVARVEKLV (341 aa)) is the PUM-HD domain. Pumilio repeat units follow at residues 626 to 661 (EIAG…MVYE), 662 to 697 (EIMP…ELGE), 698 to 733 (KLID…QMVK), 734 to 769 (ELDG…FIIS), 770 to 806 (TFFG…KVME), 807 to 842 (EILS…VIIK), 843 to 878 (ELAG…LLVN), and 879 to 920 (EMLG…LILT).

It is found in the cytoplasm. Sequence-specific RNA-binding protein that regulates translation and mRNA stability by binding the 3'-UTR of target mRNAs. Binds the APUM-binding elements (APBEs) in the 3'-UTR mRNA sequence of CLV1, PNH, WUS and FAS2. This Arabidopsis thaliana (Mouse-ear cress) protein is Pumilio homolog 3 (APUM3).